Here is a 105-residue protein sequence, read N- to C-terminus: Antimicrobial peptide 1 (105 aa).

The first 26 residues, 1 to 26 (METKRLAYVMFVLVCLFLAMAQPSQA), serve as a signal peptide directing secretion. 3 cysteine pairs are disulfide-bonded: Cys37-Cys93, Cys47-Cys105, and Cys49-Cys77.

In terms of tissue distribution, detected at higher levels in needles and twigs from canker-resistant seedlings than in needles from canker-susceptible plants. During summer, detected on cankered, healthy and marginal bark. During winter, detected at lower levels in cankered bark and bark from the canker margin than in healthy bark (at protein level).

The protein localises to the secreted. It is found in the cell wall. Functionally, antimicrobial peptide. In Pinus monticola (Western white pine), this protein is Antimicrobial peptide 1.